The primary structure comprises 888 residues: MEKKKVWFWGVKDDGEGGGGRGGGRTKDAEDDVADHLSRDGTMSQYSLSKGLLPSLGANNRSSRDVILPRFIVSPFDPRYRAWETFLVFLVLYTAWASPFEFGFLQKPRPPLSILDNIVNGFFAVDIVLTFFVAFLDKVTYLLVDDPKRIAWRYASTWLIFDVVSTFPYEIFGSLLHESIQGYGIFSMLRLWRLRRVSNCFARLEKDRKYSYFWVRCSKLLLVTLFVIHCGACFLYSIAAHYPDPSKTFMALTDENWKESPIAVRYNTAMYWSITTFSTTGYGDIHGVNSREMTFILFYMVFNLGLSAYIIGNMTNLVVHVTGRTRKFRDTIQAASGFGQRNNLPVRLQDQMVAHLCLRYRTDSEGLQQQEIIDSLPKAIRSSISHYLFYEVVDKIYLFHGISNDLLFQLVTEMKAEYFPPKEDVILQNEAPTDFYILVTGAVDIIARVNGVEQVVSEAQRGHVFGEVGVLCYRPQLFTVRTKRLSQLLRLNRTVLLNLVQANVGDGAIIMNNLLQHLKDSEDPVMKGVLADTEHMLAQGKMDLPLSLCFAAARGDDLLLHQLLRRGSSPNEMDKDGRTALHIAASKGSHYCVVLLLEHGADPNIRDSEGNVPLWEAIIGRHREIAKLLAENGAKLSLDSVSYFSGLAVEKNCLDALKDIIKYGGDVTLPDGNGTTALHRAVSEGHLEIVKFLLDQGADLDWPDSYGWTPRGLADHQGNEEIKTLFHNHRPVEKKPKPIPGIPQSPVTGKPLMKYSSEPTMHSGELVLDGGQVVVSQKRKLNNFRNSLFGIISAANSADDGGEVPRSPAVPGGGGSMIYPERVTISSPENGETGGKVVLLPNSMEELLKIGENKMGFVPTKVLTREGAEIDDITLIRDGDFLLLSRDP.

The Cytoplasmic segment spans residues Met1–Glu84. The tract at residues Gly10 to Asp31 is disordered. Residues Thr85–Leu105 traverse the membrane as a helical segment. Topologically, residues Gln106–Ser113 are extracellular. The chain crosses the membrane as a helical span at residues Ile114 to Ala134. The Cytoplasmic segment spans residues Phe135–Ala155. A helical membrane pass occupies residues Ser156 to Leu176. At His177–Gly184 the chain is on the extracellular side. The chain crosses the membrane as a helical; Voltage-sensor span at residues Ile185–Glu205. Over Lys206–Lys219 the chain is Cytoplasmic. A helical membrane pass occupies residues Leu220–Ala240. The Extracellular portion of the chain corresponds to His241–Asn267. The segment at residues Thr268–Gly287 is an intramembrane region (pore-forming). Topologically, residues Val288–Arg291 are extracellular. The chain crosses the membrane as a helical span at residues Glu292–Gly312. The Cytoplasmic segment spans residues Asn313–Pro888. Leu398–Lys519 serves as a coordination point for a nucleoside 3',5'-cyclic phosphate. 5 ANK repeats span residues Asp543–Glu572, Asp576–Ile605, Glu609–Leu638, Ser640–Leu669, and Asn673–Trp702. The region spanning Arg822 to Pro888 is the KHA domain.

This sequence belongs to the potassium channel family. Plant (TC 1.A.1.4) subfamily. In terms of assembly, the potassium channel is probably composed of a homo- or heterotetrameric complex of pore-forming subunits. As to expression, predominantly expressed in flowers; especially in pollen.

The protein localises to the membrane. In terms of biological role, highly selective inward-rectifying potassium channel that could mediate potassium uptake in the pollen membrane. Plays an important role in pollen tube development. Assuming opened or closed conformations in response to the voltage difference across the membrane, the channel is activated by hyperpolarization. May interact with the cytoskeleton or with regulatory proteins. This chain is Potassium channel AKT6 (AKT6), found in Arabidopsis thaliana (Mouse-ear cress).